Here is a 122-residue protein sequence, read N- to C-terminus: Protein NIM1-INTERACTING 2 (122 aa).

The segment covering 1 to 22 has biased composition (basic and acidic residues); it reads MNNSLKKEERVEEDNGKSDGNR. Positions 1 to 28 are disordered; the sequence is MNNSLKKEERVEEDNGKSDGNRGKPSTE. The segment at 39 to 45 is involved in NPR1/NIM1 interaction; sequence DEFFKIL. Positions 70 to 74 match the Nuclear localization signal motif; the sequence is KKRKR.

Interacts with NPR1 N-terminal region.

It is found in the nucleus. This Arabidopsis thaliana (Mouse-ear cress) protein is Protein NIM1-INTERACTING 2.